A 222-amino-acid polypeptide reads, in one-letter code: PKHD-type hydroxylase Syncc9605_1577 (222 aa).

Positions 80 to 175 (KVHSLLVSRS…RYVCVGWIES (96 aa)) constitute a Fe2OG dioxygenase domain. His-98, Asp-100, and His-156 together coordinate Fe cation. Arg-166 contributes to the 2-oxoglutarate binding site.

The cofactor is Fe(2+). L-ascorbate is required as a cofactor.

In Synechococcus sp. (strain CC9605), this protein is PKHD-type hydroxylase Syncc9605_1577.